Consider the following 453-residue polypeptide: Tryptophan biosynthesis protein TrpCF (453 aa).

Positions Met-1 to Asp-257 are indole-3-glycerol phosphate synthase. Positions Asn-258–Gly-453 are N-(5'-phosphoribosyl)anthranilate isomerase.

The protein in the N-terminal section; belongs to the TrpC family. In the C-terminal section; belongs to the TrpF family. In terms of assembly, monomer.

It catalyses the reaction N-(5-phospho-beta-D-ribosyl)anthranilate = 1-(2-carboxyphenylamino)-1-deoxy-D-ribulose 5-phosphate. It carries out the reaction 1-(2-carboxyphenylamino)-1-deoxy-D-ribulose 5-phosphate + H(+) = (1S,2R)-1-C-(indol-3-yl)glycerol 3-phosphate + CO2 + H2O. It participates in amino-acid biosynthesis; L-tryptophan biosynthesis; L-tryptophan from chorismate: step 3/5. It functions in the pathway amino-acid biosynthesis; L-tryptophan biosynthesis; L-tryptophan from chorismate: step 4/5. Its function is as follows. Bifunctional enzyme that catalyzes two sequential steps of tryptophan biosynthetic pathway. The first reaction is catalyzed by the isomerase, coded by the TrpF domain; the second reaction is catalyzed by the synthase, coded by the TrpC domain. The polypeptide is Tryptophan biosynthesis protein TrpCF (trpC) (Buchnera aphidicola subsp. Acyrthosiphon pisum (strain APS) (Acyrthosiphon pisum symbiotic bacterium)).